We begin with the raw amino-acid sequence, 411 residues long: Dual specificity protein phosphatase Mpk3 (411 aa).

The Rhodanese domain occupies 22–149 (DSKDLILLDC…FRQAFPEWCE (128 aa)). Residues 184–197 (DSACSSSAESSDCE) show a composition bias toward low complexity. The segment at 184-209 (DSACSSSAESSDCESSSHHHHHHSHH) is disordered. The 145-residue stretch at 214-358 (APVEIIPGLL…LLSFESQLRL (145 aa)) folds into the Tyrosine-protein phosphatase domain. The active-site Phosphocysteine intermediate is the Cys302.

This sequence belongs to the protein-tyrosine phosphatase family. Non-receptor class dual specificity subfamily. As to quaternary structure, interacts (via N-terminal region) with phosphorylated rl. In terms of tissue distribution, ubiquitous expression in eye and wing imaginal disks. Enriched in ovary.

It localises to the cytoplasm. It catalyses the reaction O-phospho-L-tyrosyl-[protein] + H2O = L-tyrosyl-[protein] + phosphate. It carries out the reaction O-phospho-L-seryl-[protein] + H2O = L-seryl-[protein] + phosphate. The catalysed reaction is O-phospho-L-threonyl-[protein] + H2O = L-threonyl-[protein] + phosphate. Its activity is regulated as follows. Activity abolished by tyrosine phosphatase inhibitor sodium vanadate. Activated by rl. Functionally, negatively regulates the activity of members of the MAP kinase family in response to changes in the cellular environment. Has a specificity for the ERK family. Acts as a negative regulator in a variety of developmental processes including cell differentiation and proliferation controlled by the Ras/ERK pathway. Suppresses the photoreceptor cell differentiation and wing vein formation. Required for proper oogenesis and early embryogenesis. Functions autonomously in a subset of photoreceptor progenitor cells in eye imaginal disks. Also appears to be required in surrounding non-neuronal cells for ommatidial patterning and photoreceptor differentiation. Plays a role in the maintenance of epithelial integrity during tracheal development. In Drosophila melanogaster (Fruit fly), this protein is Dual specificity protein phosphatase Mpk3 (Mkp3).